We begin with the raw amino-acid sequence, 443 residues long: MYKVRIRGIFATALTKLALEWGFKIVQPTGKILQRFQIEADYSPPDLTVKDHESKTGVVVLGKCEAFESFLQRLGESLDPIVARARAGVKEVFSGKAVGEHEVEGPRGEVFKVPARYVLTPGGTGVFTVVKPPVGPVSGVAAPEIAVEGDYVELNTSGRVTFSEHIPQEDRLRLGILAETRLKQYASIGLRFKSSAKYADEEQIIKEAEVLYRELLQLSHGGPPGAVLRRGNCFAVVLFDRRSKEVLDSARASAVPTVRGHHALRAQGLGKCLDLLDYTGADVYEKAVEFLSRGPVLIYHVKPWGEVVKMKGEALGVKNGVLVVKRPLKPGGVLDGIGVRIERGFYALTCIPRDANYVVHTYYDGSNNVVGTYININTTPEWGRRVIYIDLLVDKTYAGGVEKVLDVDEFEKYKEYFPQRLRNPLQLAPSGRLECTAEGLVVR.

The protein belongs to the FAU-1 family.

Functionally, probable RNase involved in rRNA stability through maturation and/or degradation of precursor rRNAs. Binds to RNA in loop regions with AU-rich sequences. This chain is Probable ribonuclease FAU-1, found in Pyrobaculum aerophilum (strain ATCC 51768 / DSM 7523 / JCM 9630 / CIP 104966 / NBRC 100827 / IM2).